A 497-amino-acid chain; its full sequence is Taxane 10-beta-hydroxylase (497 aa).

A heme-binding site is contributed by cysteine 443.

The protein belongs to the cytochrome P450 family. Heme serves as cofactor.

The enzyme catalyses taxa-4(20),11-dien-5alpha-yl acetate + reduced [NADPH--hemoprotein reductase] + O2 = 10beta-hydroxytaxa-4(20),11-dien-5alpha-yl acetate + oxidized [NADPH--hemoprotein reductase] + H2O + H(+). It functions in the pathway alkaloid biosynthesis; taxol biosynthesis; 10-deacetyl-2-debenzoylbaccatin III from taxa-4(20),11-dien-5alpha-ol: step 2/3. Functionally, involved in the transformation of a taxadienyl acetate by hydroxylation at C10 to yield taxadien-5-alpha-acetoxy-10-beta-ol. The chain is Taxane 10-beta-hydroxylase (CYP725A1) from Taxus cuspidata (Japanese yew).